The primary structure comprises 1466 residues: ABC transporter G family member 40 (1466 aa).

The tract at residues 1-21 (MSHRHHAALVASASGRSPSWG) is disordered. One can recognise an ABC transporter 1 domain in the interval 176-449 (GLIGQFGSSN…FEASGFRCPQ (274 aa)). 209–216 (GPPSSGKS) serves as a coordination point for ATP. The 214-residue stretch at 527 to 740 (ESLKAVLCRE…SQNAISINEF (214 aa)) folds into the ABC transmembrane type-2 1 domain. 6 helical membrane-spanning segments follow: residues 545–565 (FLYIFKVTQLIILAFLSMTVF), 581–601 (FLGALTFNLITVMFNGLSELN), 633–653 (VPVSLVEATVWVVITYYVMGF), 664–684 (FLAFFVTHLMAMALFRFLGAI), 690–710 (IAISFGMLVLLIVFVFGGFVI), and 776–796 (FWLSIGALVGFIILFNTLYIL). The span at 821–831 (YTETRNEEHRS) shows a compositional bias: basic and acidic residues. The segment at 821-851 (YTETRNEEHRSRTSTTTSSIPTSANGEGNRP) is disordered. Positions 833–843 (TSTTTSSIPTS) are enriched in low complexity. In terms of domain architecture, ABC transporter 2 spans 865-1117 (LCFNHLNYYV…KLVEYFETIL (253 aa)). 910 to 917 (GVSGAGKT) is an ATP binding site. Residues 1190-1404 (IQCVANLWKQ…TIYGVIASQF (215 aa)) form the ABC transmembrane type-2 2 domain. 7 helical membrane-spanning segments follow: residues 1209–1229 (YNSLRYLTTFLYGLFFGTVFW), 1241–1261 (LYNLLGATYAAIFFIGATNCM), 1297–1317 (FIYNIIQGILYTVIIYAMIGY), 1327–1347 (FLFFIVSSFNYFTFFGMMLVA), 1355–1375 (ANILITFALPLWNLFAGFLIF), 1396–1416 (IYGVIASQFGGNGGSISVPGG), and 1435–1455 (FLGYVILAHFGFMAAFVLIFG).

It belongs to the ABC transporter superfamily. ABCG family. PDR (TC 3.A.1.205) subfamily.

It is found in the membrane. This chain is ABC transporter G family member 40, found in Oryza sativa subsp. japonica (Rice).